A 150-amino-acid chain; its full sequence is Transcription antitermination protein NusB (150 aa).

It belongs to the NusB family.

Involved in transcription antitermination. Required for transcription of ribosomal RNA (rRNA) genes. Binds specifically to the boxA antiterminator sequence of the ribosomal RNA (rrn) operons. This is Transcription antitermination protein NusB from Alcanivorax borkumensis (strain ATCC 700651 / DSM 11573 / NCIMB 13689 / SK2).